A 236-amino-acid polypeptide reads, in one-letter code: DNA repair protein RecO (236 aa).

It belongs to the RecO family.

In terms of biological role, involved in DNA repair and RecF pathway recombination. This chain is DNA repair protein RecO, found in Stutzerimonas stutzeri (strain A1501) (Pseudomonas stutzeri).